A 159-amino-acid polypeptide reads, in one-letter code: MRIGHGFDVHAFGGEGPIIIGGVRIPYEKGLLAHSDGDVALHALTDALLGAAALGDIGKLFPDTDPAFKGADSRELLREAWRRIQAKGYTLGNVDVTIIAQAPKMLPHIPQMRVFIAEDLGCHMDDVNVKATTTEKLGFTGRGEGIACEAVALLMKAAK.

A divalent metal cation contacts are provided by D8 and H10. 4-CDP-2-C-methyl-D-erythritol 2-phosphate contacts are provided by residues D8 to H10 and H34 to S35. H42 is an a divalent metal cation binding site. 4-CDP-2-C-methyl-D-erythritol 2-phosphate is bound by residues D56–G58, F61–D65, A100–L106, T132–E135, F139, and R142.

It belongs to the IspF family. In terms of assembly, homotrimer. It depends on a divalent metal cation as a cofactor.

The catalysed reaction is 4-CDP-2-C-methyl-D-erythritol 2-phosphate = 2-C-methyl-D-erythritol 2,4-cyclic diphosphate + CMP. It participates in isoprenoid biosynthesis; isopentenyl diphosphate biosynthesis via DXP pathway; isopentenyl diphosphate from 1-deoxy-D-xylulose 5-phosphate: step 4/6. Its function is as follows. Involved in the biosynthesis of isopentenyl diphosphate (IPP) and dimethylallyl diphosphate (DMAPP), two major building blocks of isoprenoid compounds. Catalyzes the conversion of 4-diphosphocytidyl-2-C-methyl-D-erythritol 2-phosphate (CDP-ME2P) to 2-C-methyl-D-erythritol 2,4-cyclodiphosphate (ME-CPP) with a corresponding release of cytidine 5-monophosphate (CMP). This is 2-C-methyl-D-erythritol 2,4-cyclodiphosphate synthase from Salmonella typhi.